The chain runs to 1557 residues: Ras guanine nucleotide exchange factor K (1557 aa).

Over residues 1–16 (MEPTINPPVNLPPPVP) the composition is skewed to pro residues. Disordered stretches follow at residues 1–121 (MEPT…SYTV), 146–181 (VETL…KLSV), 195–238 (LYQQ…SPQL), 283–347 (SPLP…GLTP), 558–619 (NNNN…DELS), and 881–937 (TNNN…QVNH). 7 stretches are compositionally biased toward low complexity: residues 17 to 40 (SRSN…NNTN), 52 to 63 (SSPSSPSSPSPS), 73 to 90 (NNNN…NGNV), 102 to 114 (ISSP…HTSS), 148 to 161 (TLSS…KTTT), 195 to 207 (LYQQ…NPNS), and 222 to 236 (PPSS…STSP). Residues 283–310 (SPLPPPPLTIPNKVPPLPMRLPPPPPPQ) are compositionally biased toward pro residues. Coiled coils occupy residues 310 to 338 (QQLD…SNST) and 591 to 629 (NNNN…EEEL). Positions 311 to 333 (QLDQMYSNNNQQQQQQQQQQQNN) are enriched in low complexity. Residues 334–343 (ESNSTTTSEG) show a composition bias toward polar residues. Composition is skewed to low complexity over residues 558–610 (NNNN…NNNN) and 881–928 (TNNN…TPTT). The N-terminal Ras-GEF domain maps to 1058-1177 (LNAEIDAATL…QIRNCILKRT (120 aa)). The disordered stretch occupies residues 1254-1303 (PSISQNTPSSPSLIPSSPRPITSSSSVSSSTLLKSPLSQQAKSRIPETKT). Positions 1261–1291 (PSSPSLIPSSPRPITSSSSVSSSTLLKSPLS) are enriched in low complexity. The Ras-GEF domain occupies 1316–1549 (DDEEIARQLT…YHLSLLKEPR (234 aa)).

Functionally, promotes the exchange of Ras-bound GDP by GTP. The polypeptide is Ras guanine nucleotide exchange factor K (gefK) (Dictyostelium discoideum (Social amoeba)).